A 180-amino-acid polypeptide reads, in one-letter code: Large ribosomal subunit protein uL15 (180 aa).

The interval 1–62 (MKKERLEQAS…KTAGRGSKGQ (62 aa)) is disordered.

It belongs to the universal ribosomal protein uL15 family. As to quaternary structure, part of the 50S ribosomal subunit.

Its function is as follows. Binds to the 23S rRNA. This Leptospira interrogans serogroup Icterohaemorrhagiae serovar copenhageni (strain Fiocruz L1-130) protein is Large ribosomal subunit protein uL15.